The chain runs to 661 residues: Fusaric acid cluster transcription factor FUB12 (661 aa).

Residues 17–48 (CVPCRTRKIKCNAAVVGLPCGSCVSRECPDEC) constitute a DNA-binding region (zn(2)-C6 fungal-type). 2 disordered regions span residues 57–131 (TVKG…RPPG) and 151–185 (SAAQTDASDHQSNDEPDDSFNSQIHHWNPPPQLDD). Residues 73–98 (PDTNGSILSPRQQQLPTNVSRQTTDS) show a composition bias toward polar residues. Residues 99–109 (SHSDPVEESIH) are compositionally biased toward basic and acidic residues. Residues 110-119 (ASHTGSSLRN) show a composition bias toward polar residues. Basic and acidic residues predominate over residues 120-129 (DTPHSRDRRP).

The protein localises to the nucleus. Transcription factor that is involved in the formation of the two Fusaric acid derivatives, dehydrofusaric acid and fusarinolic acid, serving as a detoxification mechanism. This chain is Fusaric acid cluster transcription factor FUB12, found in Gibberella fujikuroi (strain CBS 195.34 / IMI 58289 / NRRL A-6831) (Bakanae and foot rot disease fungus).